The chain runs to 547 residues: Pyochelin synthase PchD (547 aa).

The protein belongs to the ATP-dependent AMP-binding enzyme family.

The enzyme catalyses salicylate + holo-[ACP] + ATP = salicyl-[ACP] + AMP + diphosphate. The protein operates within siderophore biosynthesis. Its pathway is antifungal biosynthesis. Functionally, involved in the biosynthesis of the siderophore pyochelin. Specifically adenylates salicylate and loads it onto the holo form of PchE via a thioester linkage to the phosphopanthetheine moiety. Is also involved in the synthesis of the antifungal antibiotic dihydroaeruginoic acid (Dha or hydroxyphenyl-thiazolinyl-carboxylate), a precursor of pyochelin. The sequence is that of Pyochelin synthase PchD from Pseudomonas aeruginosa (strain ATCC 15692 / DSM 22644 / CIP 104116 / JCM 14847 / LMG 12228 / 1C / PRS 101 / PAO1).